A 160-amino-acid chain; its full sequence is Large ribosomal subunit protein uL30m (160 aa).

A mitochondrion-targeting transit peptide spans 1 to 34; it reads MAGVLRSVFQRPPGRLQTVKKGAESLIGTEWIRH. Positions 45–64 are disordered; sequence VFQPRPEDHEKYGGDPQNPH.

Belongs to the universal ribosomal protein uL30 family. As to quaternary structure, component of the mitochondrial ribosome large subunit (39S) which comprises a 16S rRNA and about 50 distinct proteins.

It localises to the mitochondrion. The chain is Large ribosomal subunit protein uL30m (Mrpl30) from Rattus norvegicus (Rat).